We begin with the raw amino-acid sequence, 264 residues long: 3-methyl-2-oxobutanoate hydroxymethyltransferase (264 aa).

Residues Asp45 and Asp84 each contribute to the Mg(2+) site. 3-methyl-2-oxobutanoate-binding positions include 45 to 46, Asp84, and Lys112; that span reads DS. Mg(2+) is bound at residue Glu114. Glu181 serves as the catalytic Proton acceptor.

The protein belongs to the PanB family. In terms of assembly, homodecamer; pentamer of dimers. It depends on Mg(2+) as a cofactor.

Its subcellular location is the cytoplasm. It carries out the reaction 3-methyl-2-oxobutanoate + (6R)-5,10-methylene-5,6,7,8-tetrahydrofolate + H2O = 2-dehydropantoate + (6S)-5,6,7,8-tetrahydrofolate. The protein operates within cofactor biosynthesis; (R)-pantothenate biosynthesis; (R)-pantoate from 3-methyl-2-oxobutanoate: step 1/2. In terms of biological role, catalyzes the reversible reaction in which hydroxymethyl group from 5,10-methylenetetrahydrofolate is transferred onto alpha-ketoisovalerate to form ketopantoate. In Shewanella halifaxensis (strain HAW-EB4), this protein is 3-methyl-2-oxobutanoate hydroxymethyltransferase.